Here is a 210-residue protein sequence, read N- to C-terminus: Leucyl/phenylalanyl-tRNA--protein transferase (210 aa).

Belongs to the L/F-transferase family.

The protein localises to the cytoplasm. It catalyses the reaction N-terminal L-lysyl-[protein] + L-leucyl-tRNA(Leu) = N-terminal L-leucyl-L-lysyl-[protein] + tRNA(Leu) + H(+). The catalysed reaction is N-terminal L-arginyl-[protein] + L-leucyl-tRNA(Leu) = N-terminal L-leucyl-L-arginyl-[protein] + tRNA(Leu) + H(+). The enzyme catalyses L-phenylalanyl-tRNA(Phe) + an N-terminal L-alpha-aminoacyl-[protein] = an N-terminal L-phenylalanyl-L-alpha-aminoacyl-[protein] + tRNA(Phe). Functionally, functions in the N-end rule pathway of protein degradation where it conjugates Leu, Phe and, less efficiently, Met from aminoacyl-tRNAs to the N-termini of proteins containing an N-terminal arginine or lysine. The protein is Leucyl/phenylalanyl-tRNA--protein transferase of Deinococcus radiodurans (strain ATCC 13939 / DSM 20539 / JCM 16871 / CCUG 27074 / LMG 4051 / NBRC 15346 / NCIMB 9279 / VKM B-1422 / R1).